We begin with the raw amino-acid sequence, 368 residues long: Biglycan (368 aa).

The signal sequence occupies residues Met-1–Ala-16. A propeptide spanning residues Leu-17 to Asn-37 is cleaved from the precursor. Residues Ser-42 and Ser-47 are each glycosylated (O-linked (Xyl...) (glycosaminoglycan) serine). 2 disulfide bridges follow: Cys-63-Cys-69 and Cys-67-Cys-76. LRR repeat units follow at residues Lys-82–Ile-102, Ser-103–Ile-126, Ser-127–Leu-150, Val-151–Ile-171, Arg-172–Leu-195, Glu-196–Leu-220, Thr-221–Ile-241, Gln-242–Ile-265, Arg-266–Leu-289, Ala-290–Ile-312, Thr-313–Val-342, and Pro-343–Lys-368. Residues Ser-180 and Ser-198 are each glycosylated (O-linked (Xyl...) (glycosaminoglycan) serine). N-linked (GlcNAc...) asparagine glycosylation is found at Asn-270 and Asn-311. Cys-321 and Cys-354 are oxidised to a cystine.

The protein belongs to the small leucine-rich proteoglycan (SLRP) family. SLRP class I subfamily. Homodimer. Forms a ternary complex with MFAP2 and ELN. In terms of processing, the two attached glycosaminoglycan chains can be either chondroitin sulfate or dermatan sulfate. As to expression, detected in placenta (at protein level). Found in several connective tissues, especially in articular cartilages.

It is found in the secreted. It localises to the extracellular space. The protein resides in the extracellular matrix. May be involved in collagen fiber assembly. This Homo sapiens (Human) protein is Biglycan (BGN).